The sequence spans 383 residues: UDP-N-acetylglucosamine--N-acetylmuramyl-(pentapeptide) pyrophosphoryl-undecaprenol N-acetylglucosamine transferase (383 aa).

UDP-N-acetyl-alpha-D-glucosamine-binding positions include 11–13 (TGG), asparagine 125, arginine 166, serine 191, isoleucine 246, and glutamine 291. Positions 364–383 (PNGRERTPIEAEKKAPRSNS) are disordered. Residues 366-383 (GRERTPIEAEKKAPRSNS) show a composition bias toward basic and acidic residues.

It belongs to the glycosyltransferase 28 family. MurG subfamily.

It is found in the cell inner membrane. The enzyme catalyses di-trans,octa-cis-undecaprenyl diphospho-N-acetyl-alpha-D-muramoyl-L-alanyl-D-glutamyl-meso-2,6-diaminopimeloyl-D-alanyl-D-alanine + UDP-N-acetyl-alpha-D-glucosamine = di-trans,octa-cis-undecaprenyl diphospho-[N-acetyl-alpha-D-glucosaminyl-(1-&gt;4)]-N-acetyl-alpha-D-muramoyl-L-alanyl-D-glutamyl-meso-2,6-diaminopimeloyl-D-alanyl-D-alanine + UDP + H(+). It participates in cell wall biogenesis; peptidoglycan biosynthesis. Cell wall formation. Catalyzes the transfer of a GlcNAc subunit on undecaprenyl-pyrophosphoryl-MurNAc-pentapeptide (lipid intermediate I) to form undecaprenyl-pyrophosphoryl-MurNAc-(pentapeptide)GlcNAc (lipid intermediate II). This Myxococcus xanthus (strain DK1622) protein is UDP-N-acetylglucosamine--N-acetylmuramyl-(pentapeptide) pyrophosphoryl-undecaprenol N-acetylglucosamine transferase.